Reading from the N-terminus, the 108-residue chain is Protein YcgL (108 aa).

The YcgL domain occupies 12–96 (MFCVIYRSSK…PPEDLLKQHL (85 aa)).

The chain is Protein YcgL from Escherichia coli O127:H6 (strain E2348/69 / EPEC).